Consider the following 286-residue polypeptide: 4-diphosphocytidyl-2-C-methyl-D-erythritol kinase (286 aa).

Residue lysine 11 is part of the active site. Residue 94-104 coordinates ATP; sequence PMGGGIGGGSS. Aspartate 136 is a catalytic residue.

The protein belongs to the GHMP kinase family. IspE subfamily.

It catalyses the reaction 4-CDP-2-C-methyl-D-erythritol + ATP = 4-CDP-2-C-methyl-D-erythritol 2-phosphate + ADP + H(+). The protein operates within isoprenoid biosynthesis; isopentenyl diphosphate biosynthesis via DXP pathway; isopentenyl diphosphate from 1-deoxy-D-xylulose 5-phosphate: step 3/6. Catalyzes the phosphorylation of the position 2 hydroxy group of 4-diphosphocytidyl-2C-methyl-D-erythritol. The polypeptide is 4-diphosphocytidyl-2-C-methyl-D-erythritol kinase (Pseudomonas putida (strain ATCC 47054 / DSM 6125 / CFBP 8728 / NCIMB 11950 / KT2440)).